A 337-amino-acid polypeptide reads, in one-letter code: Palmitoyltransferase ZDHHC15 (337 aa).

Topologically, residues 1 to 20 (MRRGWKMALSGGLRCCRRVL) are cytoplasmic. The chain crosses the membrane as a helical span at residues 21 to 41 (SWVPVLVIVLVVLWSYYAYVF). Topologically, residues 42–56 (ELCLVTVLSPAEKVI) are lumenal. A helical membrane pass occupies residues 57–77 (YLILYHAIFVFFTWTYWKSIF). Topologically, residues 78-172 (TLPQQPNQKF…NNCIGFSNYK (95 aa)) are cytoplasmic. In terms of domain architecture, DHHC spans 129–179 (RFCDRCHLIKPDRCHHCSVCAMCVLKMDHHCPWVNNCIGFSNYKFFLQFLA). Residues Cys131, Cys134, His144, Cys145, Cys148, Cys151, and His158 each coordinate Zn(2+). The active-site S-palmitoyl cysteine intermediate is the Cys159. Cys165 contributes to the Zn(2+) binding site. A helical transmembrane segment spans residues 173–193 (FFLQFLAYSVLYCLYIATTVF). Topologically, residues 194–210 (SYFIKYWRGELPSVRSK) are lumenal. Residues 211-234 (FHVLFLLFVACMFFVSLVILFGYH) traverse the membrane as a helical segment. Over 235 to 337 (CWLVSRNKTT…SSSLAVETET (103 aa)) the chain is Cytoplasmic. The disordered stretch occupies residues 306 to 337 (PLLANEETWEDNEDDNQDYPEGSSSLAVETET). Residues 312–323 (ETWEDNEDDNQD) show a composition bias toward acidic residues. Positions 327 to 337 (GSSSLAVETET) are enriched in polar residues.

The protein belongs to the DHHC palmitoyltransferase family. Post-translationally, autopalmitoylated (in vitro). Expressed in placenta, liver, lung, kidney, heart and brain.

The protein localises to the golgi apparatus membrane. It is found in the postsynaptic density. The catalysed reaction is L-cysteinyl-[protein] + hexadecanoyl-CoA = S-hexadecanoyl-L-cysteinyl-[protein] + CoA. It catalyses the reaction L-cysteinyl-[protein] + tetradecanoyl-CoA = S-tetradecanoyl-L-cysteinyl-[protein] + CoA. The enzyme catalyses L-cysteinyl-[protein] + octadecanoyl-CoA = S-octadecanoyl-L-cysteinyl-[protein] + CoA. Functionally, palmitoyltransferase that catalyzes the addition of palmitate onto various protein substrates. Has no stringent fatty acid selectivity and in addition to palmitate can also transfer onto target proteins myristate from tetradecanoyl-CoA and stearate from octadecanoyl-CoA. Palmitoylates IGF2R and SORT1, promoting their partitioning to an endosomal membrane subdomain where they can interact with the retromer cargo-selective complex. Thereby, regulates retrograde transport from endosomes to the Golgi apparatus of these lysosomal sorting receptors and plays a role in trafficking of lysosomal proteins. In the nervous system, catalyzes the palmitoylation of DLG4/PSD95 and regulates its synaptic clustering and function in synaptogenesis. Could be involved in the differentiation of dopaminergic neurons and the development of the diencephalon. Could also catalyze the palmitoylation of GAP43. Could also palmitoylate DNAJC5 and regulate its localization to the Golgi membrane. Could also palmitoylate FYN as shown in vitro. May palmitoylate CALHM3 subunit of gustatory voltage-gated ion channels and modulate channel gating and kinetics. The sequence is that of Palmitoyltransferase ZDHHC15 from Homo sapiens (Human).